We begin with the raw amino-acid sequence, 235 residues long: uncharacterized protein (235 aa).

The protein to E.coli YbeU.

This is an uncharacterized protein from Escherichia coli (strain K12).